A 191-amino-acid chain; its full sequence is MVQAINLKKGMIFSQDGKLIKVLKANHHKPGKGNTVMQMDLRDVKSGAVVHKTMRPTEKVDLVEVTKKSAQYLYNEGDNYTFMDTDTYDQYEVSADQLGDDIKFLMPNIVVDMDFTDDNKIIGIELPSTVEMTVKETQPGIKGATVAGGGKPATMETGLVVQVPDFINEGEKLVIGTENGDYKSRANSQPR.

It belongs to the elongation factor P family.

It localises to the cytoplasm. It participates in protein biosynthesis; polypeptide chain elongation. Involved in peptide bond synthesis. Stimulates efficient translation and peptide-bond synthesis on native or reconstituted 70S ribosomes in vitro. Probably functions indirectly by altering the affinity of the ribosome for aminoacyl-tRNA, thus increasing their reactivity as acceptors for peptidyl transferase. This Lactobacillus acidophilus (strain ATCC 700396 / NCK56 / N2 / NCFM) protein is Elongation factor P 1.